A 218-amino-acid polypeptide reads, in one-letter code: Thiamine-phosphate synthase (218 aa).

4-amino-2-methyl-5-(diphosphooxymethyl)pyrimidine contacts are provided by residues 45 to 49 (QYREK) and Asn-77. Mg(2+)-binding residues include Asp-78 and Asp-97. Residue Ser-116 coordinates 4-amino-2-methyl-5-(diphosphooxymethyl)pyrimidine. 142 to 144 (TKT) is a 2-[(2R,5Z)-2-carboxy-4-methylthiazol-5(2H)-ylidene]ethyl phosphate binding site. Lys-145 is a binding site for 4-amino-2-methyl-5-(diphosphooxymethyl)pyrimidine. 2-[(2R,5Z)-2-carboxy-4-methylthiazol-5(2H)-ylidene]ethyl phosphate contacts are provided by residues Gly-173 and 193 to 194 (VT).

This sequence belongs to the thiamine-phosphate synthase family. Requires Mg(2+) as cofactor.

The catalysed reaction is 2-[(2R,5Z)-2-carboxy-4-methylthiazol-5(2H)-ylidene]ethyl phosphate + 4-amino-2-methyl-5-(diphosphooxymethyl)pyrimidine + 2 H(+) = thiamine phosphate + CO2 + diphosphate. The enzyme catalyses 2-(2-carboxy-4-methylthiazol-5-yl)ethyl phosphate + 4-amino-2-methyl-5-(diphosphooxymethyl)pyrimidine + 2 H(+) = thiamine phosphate + CO2 + diphosphate. It catalyses the reaction 4-methyl-5-(2-phosphooxyethyl)-thiazole + 4-amino-2-methyl-5-(diphosphooxymethyl)pyrimidine + H(+) = thiamine phosphate + diphosphate. It functions in the pathway cofactor biosynthesis; thiamine diphosphate biosynthesis; thiamine phosphate from 4-amino-2-methyl-5-diphosphomethylpyrimidine and 4-methyl-5-(2-phosphoethyl)-thiazole: step 1/1. Condenses 4-methyl-5-(beta-hydroxyethyl)thiazole monophosphate (THZ-P) and 2-methyl-4-amino-5-hydroxymethyl pyrimidine pyrophosphate (HMP-PP) to form thiamine monophosphate (TMP). The chain is Thiamine-phosphate synthase from Pelotomaculum thermopropionicum (strain DSM 13744 / JCM 10971 / SI).